The following is a 564-amino-acid chain: MQLAVHQDDADILLKERNQLNESILDKYRVAGQIAQTGLKYVISLINDSYHLGKTETPYTCQELCVMGDSMVTRLLAKVYNNDIREKGISNPVSIELNEIVGNFAPEIDDASKFTFNAGDIVTITLGVHIDGYAANVSHTVVIYPTGVTIDNELKPPGPLLGSKADSICAAHIATETVVALLGMALTPEKLPTQLDPNNTKLVTGKQIRNIVNSIAESFNCTVVPGSKVRRIRRFLAGQAEGVVAEKDFKGVVWSESDQEELLLNKYNKNDDQQLVLHNKQGSEFTNNSSAIPTDEFVVAADEVYNVDIKMCSTSDFKELGLVTLEEIDEFTGLNNKTNEFKTKSTIYIRDYAVNYQLRLKNSRSLLGKIDKEFTVFPFKLSHTSPSFPATNSQDLATLKKELIANKLGLSELANRHLINAKPIQVTKFIPFETILKTSNPTGKHGIDSNKPALPGMEIPLPHLGISSLKLKALLKNSSSIANARESTTVILNSFNNANEVIRLTGGNNSAPSWVHSDYSLNPQCKESVDHLLQLTKDKRFGIKVKECQPMKLTADAPESMQMD.

The protein belongs to the peptidase M24 family. In terms of assembly, component of the nucleoplasmic and cytoplasmic pre-60S ribosomal particles.

Its subcellular location is the cytoplasm. The protein resides in the nucleus. In terms of biological role, probable metalloprotease involved in proper assembly of pre-ribosomal particles during the biogenesis of the 60S ribosomal subunit. Accompanies the pre-60S particles to the cytoplasm. The protein is Probable metalloprotease ARX1 (ARX1) of Debaryomyces hansenii (strain ATCC 36239 / CBS 767 / BCRC 21394 / JCM 1990 / NBRC 0083 / IGC 2968) (Yeast).